Reading from the N-terminus, the 129-residue chain is Small ribosomal subunit protein uS8c (129 aa).

Belongs to the universal ribosomal protein uS8 family. Part of the 30S ribosomal subunit.

The protein localises to the plastid. It is found in the chloroplast. Its function is as follows. One of the primary rRNA binding proteins, it binds directly to 16S rRNA central domain where it helps coordinate assembly of the platform of the 30S subunit. This chain is Small ribosomal subunit protein uS8c (rps8), found in Oltmannsiellopsis viridis (Marine flagellate).